Here is a 444-residue protein sequence, read N- to C-terminus: UDP-N-acetylmuramate--L-alanine ligase (444 aa).

An ATP-binding site is contributed by 110–116; that stretch reads GAHGKTS.

The protein belongs to the MurCDEF family.

The protein localises to the cytoplasm. It catalyses the reaction UDP-N-acetyl-alpha-D-muramate + L-alanine + ATP = UDP-N-acetyl-alpha-D-muramoyl-L-alanine + ADP + phosphate + H(+). It functions in the pathway cell wall biogenesis; peptidoglycan biosynthesis. Functionally, cell wall formation. This chain is UDP-N-acetylmuramate--L-alanine ligase, found in Streptococcus pneumoniae (strain P1031).